A 281-amino-acid chain; its full sequence is 4-diphosphocytidyl-2-C-methyl-D-erythritol kinase (281 aa).

The active site involves Lys-15. Position 98-108 (98-108) interacts with ATP; that stretch reads PTGAGLGGGSS. Asp-140 is a catalytic residue.

The protein belongs to the GHMP kinase family. IspE subfamily.

It carries out the reaction 4-CDP-2-C-methyl-D-erythritol + ATP = 4-CDP-2-C-methyl-D-erythritol 2-phosphate + ADP + H(+). It functions in the pathway isoprenoid biosynthesis; isopentenyl diphosphate biosynthesis via DXP pathway; isopentenyl diphosphate from 1-deoxy-D-xylulose 5-phosphate: step 3/6. Catalyzes the phosphorylation of the position 2 hydroxy group of 4-diphosphocytidyl-2C-methyl-D-erythritol. The sequence is that of 4-diphosphocytidyl-2-C-methyl-D-erythritol kinase from Neisseria gonorrhoeae (strain ATCC 700825 / FA 1090).